The primary structure comprises 460 residues: Argininosuccinate lyase (460 aa).

This sequence belongs to the lyase 1 family. Argininosuccinate lyase subfamily.

It is found in the cytoplasm. It carries out the reaction 2-(N(omega)-L-arginino)succinate = fumarate + L-arginine. It functions in the pathway amino-acid biosynthesis; L-arginine biosynthesis; L-arginine from L-ornithine and carbamoyl phosphate: step 3/3. This Parvibaculum lavamentivorans (strain DS-1 / DSM 13023 / NCIMB 13966) protein is Argininosuccinate lyase.